A 210-amino-acid polypeptide reads, in one-letter code: Thymidylate kinase (210 aa).

9 to 16 lines the ATP pocket; the sequence is GLEGAGKS.

The protein belongs to the thymidylate kinase family.

The catalysed reaction is dTMP + ATP = dTDP + ADP. Its function is as follows. Phosphorylation of dTMP to form dTDP in both de novo and salvage pathways of dTTP synthesis. This chain is Thymidylate kinase, found in Aliivibrio fischeri (strain MJ11) (Vibrio fischeri).